A 486-amino-acid polypeptide reads, in one-letter code: Membrane-bound lytic murein transglycosylase F (486 aa).

An N-terminal signal peptide occupies residues 1 to 28; it reads MFAHTLFRKRCAIWLLAIGIFLMLGSCA. Positions 29-267 are non-LT domain; it reads EKPSELERIK…RLRERYYGHV (239 aa). The interval 268–486 is LT domain; it reads DVLGYVGAYA…TDLMEELPPL (219 aa). Glu314 is an active-site residue.

It in the N-terminal section; belongs to the bacterial solute-binding protein 3 family. This sequence in the C-terminal section; belongs to the transglycosylase Slt family.

The protein resides in the cell outer membrane. It catalyses the reaction Exolytic cleavage of the (1-&gt;4)-beta-glycosidic linkage between N-acetylmuramic acid (MurNAc) and N-acetylglucosamine (GlcNAc) residues in peptidoglycan, from either the reducing or the non-reducing ends of the peptidoglycan chains, with concomitant formation of a 1,6-anhydrobond in the MurNAc residue.. Murein-degrading enzyme that degrades murein glycan strands and insoluble, high-molecular weight murein sacculi, with the concomitant formation of a 1,6-anhydromuramoyl product. Lytic transglycosylases (LTs) play an integral role in the metabolism of the peptidoglycan (PG) sacculus. Their lytic action creates space within the PG sacculus to allow for its expansion as well as for the insertion of various structures such as secretion systems and flagella. The polypeptide is Membrane-bound lytic murein transglycosylase F (Stutzerimonas stutzeri (strain A1501) (Pseudomonas stutzeri)).